The sequence spans 505 residues: Phase 1 flagellin (505 aa).

It belongs to the bacterial flagellin family.

Its subcellular location is the secreted. The protein resides in the bacterial flagellum. Functionally, flagellin is the subunit protein which polymerizes to form the filaments of bacterial flagella. The chain is Phase 1 flagellin (fliC) from Salmonella naestved.